We begin with the raw amino-acid sequence, 167 residues long: NADH-quinone oxidoreductase subunit B 2 (167 aa).

4 residues coordinate [4Fe-4S] cluster: Cys-39, Cys-40, Cys-104, and Cys-134.

The protein belongs to the complex I 20 kDa subunit family. NDH-1 is composed of 14 different subunits. Subunits NuoB, C, D, E, F, and G constitute the peripheral sector of the complex. It depends on [4Fe-4S] cluster as a cofactor.

The protein resides in the cell inner membrane. It carries out the reaction a quinone + NADH + 5 H(+)(in) = a quinol + NAD(+) + 4 H(+)(out). Its function is as follows. NDH-1 shuttles electrons from NADH, via FMN and iron-sulfur (Fe-S) centers, to quinones in the respiratory chain. Couples the redox reaction to proton translocation (for every two electrons transferred, four hydrogen ions are translocated across the cytoplasmic membrane), and thus conserves the redox energy in a proton gradient. The chain is NADH-quinone oxidoreductase subunit B 2 from Burkholderia mallei (strain NCTC 10247).